A 188-amino-acid chain; its full sequence is Accessory gene regulator protein B (188 aa).

Helical transmembrane passes span 49–69 (VALI…YFLV), 100–122 (VYFQ…LIIY), 143–163 (LLSI…PEPF), and 164–184 (KQLI…IFFP).

Belongs to the AgrB family.

Its subcellular location is the cell membrane. Its function is as follows. Essential for the production of a quorum sensing system signal molecule, the autoinducing peptide (AIP). This quorum sensing system is responsible for the regulation of the expression of virulence factor genes. Involved in the proteolytic processing of AgrD, the precursor of AIP. The protein is Accessory gene regulator protein B of Staphylococcus haemolyticus (strain JCSC1435).